We begin with the raw amino-acid sequence, 244 residues long: DnaJ homolog subfamily C member 4 (244 aa).

The 66-residue stretch at 37 to 102 (NYYELLGVHP…ESRRNYDHQL (66 aa)) folds into the J domain. Residues 96-127 (RNYDHQLHSASPPKSSGSTAEPKYTQQTHSSW) are disordered. Positions 103 to 127 (HSASPPKSSGSTAEPKYTQQTHSSW) are enriched in polar residues. A helical membrane pass occupies residues 159–178 (VLGYCLLLMVAGMGLHYVAF). The interval 208 to 244 (RANRARIQQERQQRQQPRAEPSLPPESSRIMPQDTSP) is disordered.

It localises to the membrane. The sequence is that of DnaJ homolog subfamily C member 4 (Dnajc4) from Mus musculus (Mouse).